The chain runs to 256 residues: tRNA pseudouridine synthase A (256 aa).

The active-site Nucleophile is Asp-52. Tyr-110 serves as a coordination point for substrate.

The protein belongs to the tRNA pseudouridine synthase TruA family. Homodimer.

It carries out the reaction uridine(38/39/40) in tRNA = pseudouridine(38/39/40) in tRNA. Functionally, formation of pseudouridine at positions 38, 39 and 40 in the anticodon stem and loop of transfer RNAs. The polypeptide is tRNA pseudouridine synthase A (Stenotrophomonas maltophilia (strain R551-3)).